The following is a 316-amino-acid chain: tRNA pseudouridine synthase B (316 aa).

Asp47 (nucleophile) is an active-site residue.

It belongs to the pseudouridine synthase TruB family. Type 1 subfamily.

It carries out the reaction uridine(55) in tRNA = pseudouridine(55) in tRNA. Functionally, responsible for synthesis of pseudouridine from uracil-55 in the psi GC loop of transfer RNAs. In Aliivibrio fischeri (strain MJ11) (Vibrio fischeri), this protein is tRNA pseudouridine synthase B.